The following is a 347-amino-acid chain: Gibberellin 3-beta-dioxygenase 2 (347 aa).

One can recognise a Fe2OG dioxygenase domain in the interval 197–301 (DFQGTQAVIQ…RFSMAYLWGP (105 aa)). Fe cation is bound by residues histidine 225, aspartate 227, and histidine 282. Arginine 292 is an active-site residue. Arginine 292 contributes to the 2-oxoglutarate binding site.

Belongs to the iron/ascorbate-dependent oxidoreductase family. GA3OX subfamily. The cofactor is L-ascorbate. Fe(2+) is required as a cofactor. Highly expressed in seedlings but also expressed in roots, leaves, stems, flowers, siliques and seeds. Detected predominantly in the hypocotyl and roots of young seedlings and in the petioles and vasculature of leaves. Not expressed in the shoot apical meristem, but found in the elongation zone, the quiescent center cells and the columella cells of the root tips. Found in the cortex and the endodermis of the embryo axis in germinating seeds.

The catalysed reaction is gibberellin A20 + 2-oxoglutarate + O2 = gibberellin A1 + succinate + CO2. The protein operates within plant hormone biosynthesis; gibberellin biosynthesis. Converts the inactive gibberellin (GA) precursors GA9 and GA20 in the bioactives gibberellins GA4 and GA1. Involved in the production of bioactive GA for vegetative growth and development. In Arabidopsis thaliana (Mouse-ear cress), this protein is Gibberellin 3-beta-dioxygenase 2.